The sequence spans 189 residues: Elongation factor P (189 aa).

The protein belongs to the elongation factor P family.

It localises to the cytoplasm. Its pathway is protein biosynthesis; polypeptide chain elongation. Involved in peptide bond synthesis. Stimulates efficient translation and peptide-bond synthesis on native or reconstituted 70S ribosomes in vitro. Probably functions indirectly by altering the affinity of the ribosome for aminoacyl-tRNA, thus increasing their reactivity as acceptors for peptidyl transferase. The protein is Elongation factor P of Rhizobium radiobacter (Agrobacterium tumefaciens).